A 238-amino-acid chain; its full sequence is Ribonuclease 3 (238 aa).

The RNase III domain maps to 4–134; it reads PRQALLDAFG…LLGAIYLHHG (131 aa). A Mg(2+)-binding site is contributed by Glu44. Asp48 is a catalytic residue. Asp120 and Glu123 together coordinate Mg(2+). Glu123 is an active-site residue. Residues 161 to 229 enclose the DRBM domain; it reads DWKTSLQELT…ASAAWKALDV (69 aa).

The protein belongs to the ribonuclease III family. As to quaternary structure, homodimer. It depends on Mg(2+) as a cofactor.

The protein resides in the cytoplasm. It carries out the reaction Endonucleolytic cleavage to 5'-phosphomonoester.. Digests double-stranded RNA. Involved in the processing of primary rRNA transcript to yield the immediate precursors to the large and small rRNAs (23S and 16S). Processes some mRNAs, and tRNAs when they are encoded in the rRNA operon. Processes pre-crRNA and tracrRNA of type II CRISPR loci if present in the organism. The chain is Ribonuclease 3 from Mycobacterium leprae (strain TN).